An 86-amino-acid chain; its full sequence is Curamycin polyketide synthase acyl carrier protein (86 aa).

Residues Gln-7–Ala-86 form the Carrier domain. Position 44 is an O-(pantetheine 4'-phosphoryl)serine (Ser-44).

In terms of processing, 4'-phosphopantetheine is transferred from CoA to a specific serine of the apo-ACP-like protein.

Its pathway is antibiotic biosynthesis; curamycin biosynthesis. Functionally, acyl carrier protein. This chain is Curamycin polyketide synthase acyl carrier protein (curE), found in Streptomyces cyaneus (Streptomyces curacoi).